A 161-amino-acid chain; its full sequence is Phosphopantetheine adenylyltransferase (161 aa).

Thr9 lines the substrate pocket. Residues Thr9 to Phe10 and His17 each bind ATP. Substrate is bound by residues Lys41, Leu73, and Arg87. ATP contacts are provided by residues Gly88–Arg90, Glu98, and Tyr123–Thr129.

Belongs to the bacterial CoaD family. In terms of assembly, homohexamer. The cofactor is Mg(2+).

The protein resides in the cytoplasm. The enzyme catalyses (R)-4'-phosphopantetheine + ATP + H(+) = 3'-dephospho-CoA + diphosphate. It functions in the pathway cofactor biosynthesis; coenzyme A biosynthesis; CoA from (R)-pantothenate: step 4/5. Functionally, reversibly transfers an adenylyl group from ATP to 4'-phosphopantetheine, yielding dephospho-CoA (dPCoA) and pyrophosphate. The chain is Phosphopantetheine adenylyltransferase from Cupriavidus metallidurans (strain ATCC 43123 / DSM 2839 / NBRC 102507 / CH34) (Ralstonia metallidurans).